The sequence spans 3412 residues: Genome polyprotein (3412 aa).

Residues 1–104 are Cytoplasmic-facing; sequence MSGRKAQGKT…LSSRKRRSNE (104 aa). The tract at residues 38-72 is hydrophobic; homodimerization of capsid protein C; it reads PGPSRGVQGFIFFFLFNILTGKKLTTHLKRLWRML. Residues 102 to 121 constitute a propeptide, ER anchor for the capsid protein C, removed in mature form by serine protease NS3; that stretch reads SNEMAMMPLLILSMVILAGG. The helical transmembrane segment at 105–125 threads the bilayer; it reads MAMMPLLILSMVILAGGVTLV. Residues 126-244 lie on the Extracellular side of the membrane; it reads RKNRWLLLNV…GERQLQKIER (119 aa). N-linked (GlcNAc...) asparagine; by host glycans are attached at residues N134 and N150. Residues 245 to 265 form a helical membrane-spanning segment; it reads WLVRNPFFAITALAIAYLVGN. Topologically, residues 266-270 are cytoplasmic; that stretch reads NMTQR. Residues 271–285 traverse the membrane as a helical segment; it reads VVIALLVLAVGPAYS. At 286-730 the chain is on the extracellular side; that stretch reads AHCIGITDRD…TVFGSAFQGL (445 aa). Disulfide bonds link C288/C315, C345/C401, C345/C406, C359/C390, C377/C401, C377/C406, C467/C568, and C585/C615. The segment at 383–396 is fusion peptide; that stretch reads DRGWGNGCGLFGKG. A helical transmembrane segment spans residues 731-751; sequence FGGLSWITKVIMGAVLIWVGI. Residues 752 to 757 lie on the Extracellular side of the membrane; it reads NTRNMT. The helical transmembrane segment at 758 to 778 threads the bilayer; it reads MSMSMILVGVIMMFLSLGVGA. Residues 779–1132 are Extracellular-facing; it reads DQGCAVNFGK…LVRSWVTAGE (354 aa). 6 cysteine pairs are disulfide-bonded: C782–C793, C833–C921, C957–C1002, C1058–C1107, C1069–C1091, and C1090–C1094. N-linked (GlcNAc...) asparagine; by host glycosylation is found at N908 and N986. Residues 1133 to 1153 form a helical membrane-spanning segment; that stretch reads VHAVPFGLVSMMIAMEVVLRK. Residues 1154 to 1201 lie on the Cytoplasmic side of the membrane; the sequence is RQGPKQMLVGGIILLGAMLVGQVTVLDLVKLIVAVGLHFHEINNGGDA. The helical transmembrane segment at 1202-1222 threads the bilayer; the sequence is MYMALIASFSIRPGLLVGFGL. The Lumenal segment spans residues 1223–1287; sequence RTLWSPRERL…VLPLMALLTP (65 aa). Residues 1288 to 1308 form a helical membrane-spanning segment; it reads VTMHEVRMATMLFCTVVIVGV. Over 1309–1355 the chain is Cytoplasmic; it reads LHQNAKDTSMQKTIPIVALTLTSYMGLTQPFLGLCAYMSTQVFGRRS. Residues 1356–1376 form a helical membrane-spanning segment; it reads IPVNEALAAAGLVGVLAGLAF. Over 1377–1378 the chain is Lumenal; that stretch reads QD. Residues 1379–1399 form a helical membrane-spanning segment; sequence MENFLGPIAVGGILMMLVSVA. Over 1400-1456 the chain is Cytoplasmic; sequence GKVDGLELKKLGEVSWEEEAEISGSSSRYDVALSEQGEFKLLSEDKVPWDQIVMTSL. The tract at residues 1407–1446 is interacts with and activates NS3 protease; sequence LKKLGEVSWEEEAEISGSSSRYDVALSEQGEFKLLSEDKV. The helical intramembrane region spans 1457–1477; that stretch reads ALVGAAIHPFALLLVLGGWVL. Residues 1478-2157 lie on the Cytoplasmic side of the membrane; sequence HIKGARRSGD…RNALSMMPEA (680 aa). Residues 1485-1665 enclose the Peptidase S7 domain; the sequence is SGDVLWDIPT…EVKEESKEEL (181 aa). Residues H1537, D1561, and S1622 each act as charge relay system; for serine protease NS3 activity in the active site. Residues 1669–1825 enclose the Helicase ATP-binding domain; the sequence is PTMLKKGMTT…HSNGEIEDVQ (157 aa). Residues 1673-1676 are important for RNA-binding; the sequence is KKGM. ATP is bound at residue 1682 to 1689; it reads FHPGAGKT. Positions 1773 to 1776 match the DEAH box motif; the sequence is DEAH. The 178-residue stretch at 1820-1997 folds into the Helicase C-terminal domain; that stretch reads EIEDVQTDIP…VRGGMVAPLY (178 aa). K1877 is subject to N6-acetyllysine; by host. The segment at 1942 to 1961 is disordered; it reads AAQRRGRIGRNPNRDGDSYY. The chain crosses the membrane as a helical span at residues 2158–2178; sequence MTIVMLFILAGLLTSGMVIFF. The Lumenal portion of the chain corresponds to 2179–2186; it reads MSPKGMSR. The helical intramembrane region spans 2187–2207; that stretch reads MSMAMGTMAGSGYLMFLGGVK. Residues 2208 to 2209 are Lumenal-facing; the sequence is PT. Residues 2210 to 2230 form a helical membrane-spanning segment; it reads HISYVMLIFFVLMVVIIPEPG. Residues 2231–2241 lie on the Cytoplasmic side of the membrane; the sequence is QQRTIQDNQVA. A helical membrane pass occupies residues 2242-2262; sequence YLIIGILTLLSIVAANELGML. At 2263–2293 the chain is on the lumenal side; sequence EKTKEDFFGRRNIATSGGTIPWSWPDLDLKP. Residues 2294 to 2314 constitute an intramembrane region (helical); the sequence is GAAWTVYVGIVTMLSPMLHHW. Topologically, residues 2315–2360 are lumenal; the sequence is IKVEYGNLSLSGIAQSASVLSFMDKGIPFMKMNISVVILLVSGWNS. A helical membrane pass occupies residues 2361 to 2380; it reads ITVIPLLCGVGGAMLHWTLI. At 2381 to 2421 the chain is on the cytoplasmic side; the sequence is LPGIKAQQSKLAQKRVFHGVAKNPVVDGNPTADIEEAPEMP. Residues 2422 to 2442 form a helical membrane-spanning segment; sequence ALYEKKLALYLLLALSLMSVA. Residues 2443-2445 lie on the Lumenal side of the membrane; the sequence is MCR. The helical transmembrane segment at 2446-2466 threads the bilayer; the sequence is TPFSLAEGIVLSSAALGPLIE. The Cytoplasmic portion of the chain corresponds to 2467-3411; that stretch reads GNTSLLWNGP…VDADLQPGEL (945 aa). Positions 2508 to 2772 constitute an mRNA cap 0-1 NS5-type MT domain; that stretch reads GSASGKTLGE…DVILPIGTRS (265 aa). An S-adenosyl-L-methionine-binding site is contributed by S2563. Position 2563 is a phosphoserine (S2563). K2568 acts as the For 2'-O-MTase activity in catalysis. Residues G2593, W2594, T2611, L2612, D2638, and I2639 each contribute to the S-adenosyl-L-methionine site. D2653 serves as the catalytic For 2'-O-MTase activity. S-adenosyl-L-methionine is bound at residue I2654. Residues K2689 and E2725 each act as for 2'-O-MTase activity in the active site. Y2727 is a binding site for S-adenosyl-L-methionine. A Nuclear localization signal motif is present at residues 2879–2912; that stretch reads RKIMKVVNRWLFRHLAREKNPRLCTKEEFIAKVR. Zn(2+)-binding residues include E2946, H2950, C2955, and C2958. One can recognise a RdRp catalytic domain in the interval 3036–3188; the sequence is GGFYADDTAG…RPVDDRFGLA (153 aa). Zn(2+) is bound by residues H3223, C3239, and C3358.

In the N-terminal section; belongs to the class I-like SAM-binding methyltransferase superfamily. mRNA cap 0-1 NS5-type methyltransferase family. As to quaternary structure, homodimer. Interacts (via N-terminus) with host EXOC1 (via C-terminus); this interaction results in EXOC1 degradation through the proteasome degradation pathway. In terms of assembly, forms heterodimers with envelope protein E in the endoplasmic reticulum and Golgi. Homodimer; in the endoplasmic reticulum and Golgi. Interacts with protein prM. Interacts with non-structural protein 1. As to quaternary structure, homodimer; Homohexamer when secreted. Interacts with envelope protein E. In terms of assembly, interacts (via N-terminus) with serine protease NS3. Forms a heterodimer with serine protease NS3. May form homooligomers. As to quaternary structure, forms a heterodimer with NS2B. Interacts with non-structural protein 2A (via N-terminus). Interacts with NS4B. Interacts with unphosphorylated RNA-directed RNA polymerase NS5; this interaction stimulates RNA-directed RNA polymerase NS5 guanylyltransferase activity. NS3 interacts with host PDCD6IP; this interaction contributes to virion release. In terms of assembly, interacts with serine protease NS3. Homodimer. Interacts with host STAT2; this interaction prevents the establishment of cellular antiviral state. Interacts with serine protease NS3. Interacts with host TRIM23; this interaction leads to NS5 ubiquitination. Specific enzymatic cleavages in vivo yield mature proteins. The nascent capsid protein C contains a C-terminal hydrophobic domain that act as a signal sequence for translocation of prM into the lumen of the ER. Mature capsid protein C is cleaved at a site upstream of this hydrophobic domain by NS3. prM is cleaved in post-Golgi vesicles by a host furin, releasing the mature small envelope protein M, and peptide pr. Non-structural protein 2A-alpha, a C-terminally truncated form of non-structural protein 2A, results from partial cleavage by NS3. Specific enzymatic cleavages in vivo yield mature proteins peptide 2K acts as a signal sequence and is removed from the N-terminus of NS4B by the host signal peptidase in the ER lumen. Signal cleavage at the 2K-4B site requires a prior NS3 protease-mediated cleavage at the 4A-2K site. Post-translationally, cleaved in post-Golgi vesicles by a host furin, releasing the mature small envelope protein M, and peptide pr. This cleavage is incomplete as up to 30% of viral particles still carry uncleaved prM. In terms of processing, N-glycosylated. N-glycosylated. The excreted form is glycosylated and this is required for efficient secretion of the protein from infected cells. Post-translationally, polyubiquitinated; ubiquitination is probably mediated by host TRIM23 and is prerequisite for NS5-STAT2 interaction. NS5 is not ISGylated or sumoylated. In terms of processing, acetylated by host KAT5. Acetylation modulates NS3 RNA-binding and unwinding activities and plays an important positive role for viral replication. Phosphorylated on serines residues. This phosphorylation may trigger NS5 nuclear localization.

It is found in the virion. Its subcellular location is the host nucleus. The protein localises to the host cytoplasm. It localises to the host perinuclear region. The protein resides in the secreted. It is found in the virion membrane. Its subcellular location is the host endoplasmic reticulum membrane. It carries out the reaction Selective hydrolysis of -Xaa-Xaa-|-Yaa- bonds in which each of the Xaa can be either Arg or Lys and Yaa can be either Ser or Ala.. The enzyme catalyses RNA(n) + a ribonucleoside 5'-triphosphate = RNA(n+1) + diphosphate. The catalysed reaction is a ribonucleoside 5'-triphosphate + H2O = a ribonucleoside 5'-diphosphate + phosphate + H(+). It catalyses the reaction ATP + H2O = ADP + phosphate + H(+). It carries out the reaction a 5'-end (5'-triphosphoguanosine)-ribonucleoside in mRNA + S-adenosyl-L-methionine = a 5'-end (N(7)-methyl 5'-triphosphoguanosine)-ribonucleoside in mRNA + S-adenosyl-L-homocysteine. The enzyme catalyses a 5'-end (N(7)-methyl 5'-triphosphoguanosine)-ribonucleoside in mRNA + S-adenosyl-L-methionine = a 5'-end (N(7)-methyl 5'-triphosphoguanosine)-(2'-O-methyl-ribonucleoside) in mRNA + S-adenosyl-L-homocysteine + H(+). In terms of biological role, plays a role in virus budding by binding to the cell membrane and gathering the viral RNA into a nucleocapsid that forms the core of a mature virus particle. During virus entry, may induce genome penetration into the host cytoplasm after hemifusion induced by the surface proteins. Can migrate to the cell nucleus where it modulates host functions. Inhibits RNA silencing by interfering with host Dicer. Functionally, prevents premature fusion activity of envelope proteins in trans-Golgi by binding to envelope protein E at pH6.0. After virion release in extracellular space, gets dissociated from E dimers. Its function is as follows. Acts as a chaperone for envelope protein E during intracellular virion assembly by masking and inactivating envelope protein E fusion peptide. prM is the only viral peptide matured by host furin in the trans-Golgi network probably to avoid catastrophic activation of the viral fusion activity in acidic Golgi compartment prior to virion release. prM-E cleavage is inefficient, and many virions are only partially matured. These uncleaved prM would play a role in immune evasion. In terms of biological role, may play a role in virus budding. Exerts cytotoxic effects by activating a mitochondrial apoptotic pathway through M ectodomain. May display a viroporin activity. Binds to host cell surface receptor and mediates fusion between viral and cellular membranes. Envelope protein is synthesized in the endoplasmic reticulum in the form of heterodimer with protein prM. They play a role in virion budding in the ER, and the newly formed immature particle is covered with 60 spikes composed of heterodimer between precursor prM and envelope protein E. The virion is transported to the Golgi apparatus where the low pH causes dissociation of PrM-E heterodimers and formation of E homodimers. prM-E cleavage is inefficient, and many virions are only partially matured. These uncleaved prM would play a role in immune evasion. Functionally, involved in immune evasion, pathogenesis and viral replication. Once cleaved off the polyprotein, is targeted to three destinations: the viral replication cycle, the plasma membrane and the extracellular compartment. Essential for viral replication. Required for formation of the replication complex and recruitment of other non-structural proteins to the ER-derived membrane structures. Excreted as a hexameric lipoparticle that plays a role against host immune response. Antagonizing the complement function. Binds to the host macrophages and dendritic cells. Inhibits signal transduction originating from Toll-like receptor 3 (TLR3). Its function is as follows. Component of the viral RNA replication complex that functions in virion assembly and antagonizes the host immune response. In terms of biological role, required cofactor for the serine protease function of NS3. May have membrane-destabilizing activity and form viroporins. Displays three enzymatic activities: serine protease, NTPase and RNA helicase. NS3 serine protease, in association with NS2B, performs its autocleavage and cleaves the polyprotein at dibasic sites in the cytoplasm: C-prM, NS2A-NS2B, NS2B-NS3, NS3-NS4A, NS4A-2K and NS4B-NS5. NS3 RNA helicase binds RNA and unwinds dsRNA in the 3' to 5' direction. Also plays a role in virus assembly. Functionally, regulates the ATPase activity of the NS3 helicase activity. NS4A allows NS3 helicase to conserve energy during unwinding. Its function is as follows. Functions as a signal peptide for NS4B and is required for the interferon antagonism activity of the latter. In terms of biological role, induces the formation of ER-derived membrane vesicles where the viral replication takes place. Inhibits interferon (IFN)-induced host STAT1 phosphorylation and nuclear translocation, thereby preventing the establishment of cellular antiviral state by blocking the IFN-alpha/beta pathway. Replicates the viral (+) and (-) RNA genome, and performs the capping of genomes in the cytoplasm. NS5 methylates viral RNA cap at guanine N-7 and ribose 2'-O positions. Besides its role in RNA genome replication, also prevents the establishment of cellular antiviral state by blocking the interferon-alpha/beta (IFN-alpha/beta) signaling pathway. IFN-I induces binding of NS5 to host IFN-activated transcription factor STAT2, preventing its transcriptional activity. Host TRIM23 is the E3 ligase that interacts with and polyubiquitinates NS5 to promote its binding to STAT2 and trigger IFN-I signaling inhibition. The sequence is that of Genome polyprotein from Yellow fever virus (isolate Ethiopia/Couma/1961) (YFV).